The primary structure comprises 149 residues: Large ribosomal subunit protein bL9 (149 aa).

This sequence belongs to the bacterial ribosomal protein bL9 family.

Binds to the 23S rRNA. The sequence is that of Large ribosomal subunit protein bL9 from Geobacillus sp. (strain WCH70).